Reading from the N-terminus, the 151-residue chain is Myosin catalytic light chain, smooth muscle (151 aa).

Ala1 is modified (N-acetylalanine). 3 EF-hand domains span residues 6–41, 83–118, and 119–151; these read DRIT…LGQN, GSYE…LGEK, and MSEE…LLEG.

In molluscan muscle, calcium regulation is associated with myosin rather than with actin. Muscle myosin contains two types of light chains: the catalytic light chain, essential for ATPase activity, and the regulatory light chain, a calcium-binding protein responsible for Ca(2+) dependent binding and Ca(2+) dependent Mg-ATPase activity. This chain is Myosin catalytic light chain, smooth muscle, found in Halocynthia roretzi (Sea squirt).